Consider the following 860-residue polypeptide: Ubiquitin fusion degradation protein 3 homolog (860 aa).

WD repeat units lie at residues 27–65 (AHKS…YTKT), 71–112 (PKGI…PYAI), 115–154 (EHKQ…SSSF), 163–203 (GHTL…SVFK), 204–242 (GHTD…ILRK), and 244–283 (ATQA…DGNL). The 101-residue stretch at 397–497 (PIHYLEEITR…DKLSKGAASA (101 aa)) folds into the PFU domain. The disordered stretch occupies residues 494–585 (AASAQSGYED…LPQNKKKPRG (92 aa)). Positions 586-856 (PLVPVPDFYI…KNIARDIVEM (271 aa)) constitute a PUL domain.

The protein belongs to the WD repeat PLAP family. As to quaternary structure, interacts with cdc-48.1. Expressed in intestine (at protein level).

The protein localises to the cytoplasm. Functionally, plays a role in protein ubiquitination, sorting and degradation through its association with cdc-48.1 and/or cdc-48.2. This Caenorhabditis elegans protein is Ubiquitin fusion degradation protein 3 homolog.